We begin with the raw amino-acid sequence, 378 residues long: Glutamate 5-kinase (378 aa).

Lysine 14 lines the ATP pocket. 3 residues coordinate substrate: serine 54, aspartate 141, and asparagine 153. 173–174 (SD) provides a ligand contact to ATP. In terms of domain architecture, PUA spans 279–356 (AGRLTVDAGA…DEISEILGYD (78 aa)).

It belongs to the glutamate 5-kinase family.

The protein localises to the cytoplasm. It carries out the reaction L-glutamate + ATP = L-glutamyl 5-phosphate + ADP. It functions in the pathway amino-acid biosynthesis; L-proline biosynthesis; L-glutamate 5-semialdehyde from L-glutamate: step 1/2. Its function is as follows. Catalyzes the transfer of a phosphate group to glutamate to form L-glutamate 5-phosphate. The polypeptide is Glutamate 5-kinase (Brucella anthropi (strain ATCC 49188 / DSM 6882 / CCUG 24695 / JCM 21032 / LMG 3331 / NBRC 15819 / NCTC 12168 / Alc 37) (Ochrobactrum anthropi)).